Reading from the N-terminus, the 150-residue chain is C-type natriuretic peptide (150 aa).

A signal peptide spans 1–31 (MSISSSSSSSSSSSSCLLLISLMLLAASCQG). A propeptide spanning residues 32 to 127 (RPDLQHRNHK…RKMFRGRTKK (96 aa)) is cleaved from the precursor. Low complexity predominate over residues 60–73 (GAADGSSGEEAALS). Residues 60–109 (GAADGSSGEEAALSQRAPPSIRALHPRSGRLGLRDDLEAEPPAENKPRRR) are disordered. Cysteine 134 and cysteine 150 are joined by a disulfide.

This sequence belongs to the natriuretic peptide family. Expressed in brain, but not in atrium or ventricle.

The protein resides in the secreted. Functionally, hormone which plays a role in endochondral ossification through regulation of cartilaginous growth plate chondrocytes proliferation and differentiation. May also be vasoactive and natriuretic. This chain is C-type natriuretic peptide (cnp), found in Acipenser transmontanus (White sturgeon).